Here is a 645-residue protein sequence, read N- to C-terminus: Sodium/hydrogen exchanger 9 (645 aa).

Topologically, residues 1 to 20 are lumenal; sequence MERQSRVMSEKDEYQFQHQG. The helical transmembrane segment at 21–41 threads the bilayer; that stretch reads AVELLVFNFLLILTILTIWLF. The Cytoplasmic segment spans residues 42-45; the sequence is KNHR. The chain crosses the membrane as a helical span at residues 46 to 66; it reads FRFLHETGGAMVYGLIMGLIL. At 67 to 126 the chain is on the lumenal side; the sequence is RYATAPTDIESGTVYDCVKLTFSPSTLLVNITDQVYEYKYKREISQHNINPHQGNAILEK. N96 is a glycosylation site (N-linked (GlcNAc...) asparagine). A helical transmembrane segment spans residues 127–147; that stretch reads MTFDPEIFFNVLLPPIIFHAG. The Cytoplasmic segment spans residues 148–164; sequence YSLKKRHFFQNLGSILT. The chain crosses the membrane as a helical span at residues 165–185; that stretch reads YAFLGTAISCIVIGLIMYGFV. The Lumenal portion of the chain corresponds to 186–203; it reads KAMIHAGQLKNGDFHFTD. The helical transmembrane segment at 204–224 threads the bilayer; sequence CLFFGSLMSATDPVTVLAIFH. At 225 to 235 the chain is on the cytoplasmic side; the sequence is ELHVDPDLYTL. The helical transmembrane segment at 236–256 threads the bilayer; it reads LFGESVLNDAVAIVLTYSISI. At 257-277 the chain is on the lumenal side; that stretch reads YSPKENPNAFDAAAFFQSVGN. Residues 278 to 298 traverse the membrane as a helical segment; that stretch reads FLGIFAGSFAMGSAYAIITAL. Topologically, residues 299-301 are cytoplasmic; it reads LTK. A run of 2 helical transmembrane segments spans residues 302-322 and 323-343; these read FTKL…LSWS and AFLS…FCGV. Residues 344 to 364 are Cytoplasmic-facing; sequence TQAHYTYNNLSSDSKIRTKQL. Residues 365–385 form a helical membrane-spanning segment; that stretch reads FEFMNFLAENVIFCYMGLALF. T386 is a topological domain (lumenal). A helical membrane pass occupies residues 387–407; that stretch reads FQNHIFNALFILGAFLAIFVA. Residues 408-429 lie on the Cytoplasmic side of the membrane; the sequence is RACNIYPLSFLLNLGRKQKIPW. The helical transmembrane segment at 430 to 450 threads the bilayer; it reads NFQHMMMFSGLRGAIAFALAI. Residues 451–465 lie on the Lumenal side of the membrane; the sequence is RNTESQPKQMMFTTT. A helical transmembrane segment spans residues 466–486; it reads LLLVFFTVWVFGGGTTPMLTW. Residues 487 to 645 are Cytoplasmic-facing; it reads LQIRVGVDLD…EQTLGQSQLN (159 aa). Positions 594-622 are disordered; the sequence is QASSPCSPPARLGLDQKASPQTPGKENIY.

Belongs to the monovalent cation:proton antiporter 1 (CPA1) transporter (TC 2.A.36) family. In terms of assembly, homodimer; phosphatidylinositol-4,5-bisphosphate (PIP2) and phosphatidylinositol 3,4,5-trisphosphate (PIP3) could be involved in the dimer stabilization. Interacts (via the C-terminus) with RACK1. Interacts with CHP1. In terms of tissue distribution, ubiquitously expressed in all tissues tested. Expressed at highest levels in heart and skeletal muscle, followed by placenta, kidney, and liver. Expressed in the brain, in the medulla and spinal cord.

Its subcellular location is the late endosome membrane. The protein resides in the early endosome membrane. It localises to the recycling endosome membrane. It is found in the cell membrane. The protein localises to the cytoplasmic vesicle. Its subcellular location is the phagosome membrane. The enzyme catalyses Na(+)(in) + H(+)(out) = Na(+)(out) + H(+)(in). The catalysed reaction is K(+)(in) + H(+)(out) = K(+)(out) + H(+)(in). In terms of biological role, endosomal Na(+), K(+)/H(+) antiporter. Mediates the electroneutral exchange of endosomal luminal H(+) for a cytosolic Na(+) or K(+). By facilitating proton efflux, SLC9A9 counteracts the acidity generated by vacuolar (V)-ATPase, thereby limiting luminal acidification. Regulates organellar pH and consequently, e.g., endosome maturation and endocytic trafficking of plasma membrane receptors and neurotransporters. Promotes the recycling of transferrin receptors back to the cell surface to facilitate additional iron uptake in the brain. Regulates synaptic transmission by regulating the luminal pH of axonal endosomes. Regulates phagosome lumenal pH, thus affecting phagosome maturation, and consequently, microbicidal activity in macrophages. Can also be active at the cell surface of specialized cells, e.g., in the inner ear hair bundles uses the high K(+) of the endolymph to regulate intracelular pH. In Homo sapiens (Human), this protein is Sodium/hydrogen exchanger 9.